Reading from the N-terminus, the 419-residue chain is Tol-Pal system protein TolB (419 aa).

Positions 1–19 are cleaved as a signal peptide; it reads MFNRIISLFLLLFTGQVIA.

The protein belongs to the TolB family. The Tol-Pal system is composed of five core proteins: the inner membrane proteins TolA, TolQ and TolR, the periplasmic protein TolB and the outer membrane protein Pal. They form a network linking the inner and outer membranes and the peptidoglycan layer.

The protein localises to the periplasm. Its function is as follows. Part of the Tol-Pal system, which plays a role in outer membrane invagination during cell division and is important for maintaining outer membrane integrity. The polypeptide is Tol-Pal system protein TolB (Legionella pneumophila subsp. pneumophila (strain Philadelphia 1 / ATCC 33152 / DSM 7513)).